A 348-amino-acid chain; its full sequence is Haptoglobin-related protein (348 aa).

A signal peptide (not cleaved) is located at residues 1 to 18 (MSDLGAVISLLLWGRQLF). Positions 34 to 87 (FPKPPEIANGYVEHLFRYQCKNYYRLRTEGDGVYTLNDKKQWINKAVGDKLPEC) constitute a Sushi domain. The region spanning 104–346 (ILGGHLDAKG…IQHWVQKTIA (243 aa)) is the Peptidase S1 domain. Disulfide bonds link C251–C282 and C293–C323.

Belongs to the peptidase S1 family. As to expression, in adult liver the amount of HPR mRNA is at the lower limit of detection, therefore the extent of its expression is at most less than 1000-fold that of the HP1F gene. No HPR mRNA can be detected in fetal liver. Expressed in Hep-G2 and leukemia MOLT-4 cell lines.

The protein resides in the secreted. Functionally, primate-specific plasma protein associated with apolipoprotein L-I (apoL-I)-containing high-density lipoprotein (HDL). This HDL particle, termed trypanosome lytic factor-1 (TLF-1), mediates human innate immune protection against many species of African trypanosomes. Binds hemoglobin with high affinity and may contribute to the clearance of cell-free hemoglobin to allow hepatic recycling of heme iron. This Homo sapiens (Human) protein is Haptoglobin-related protein (HPR).